Here is a 213-residue protein sequence, read N- to C-terminus: Protein RCR1 (213 aa).

The Lumenal portion of the chain corresponds to 1-39 (MGLISYENEAINEVKKADNHHVSKFVTSYYGPSSSSWQS). Residues 40–62 (GIWILFVLFVAAVILIILFTFVA) traverse the membrane as a helical segment. Residues 63 to 213 (NRRRRRMGRA…PERAKVNARS (151 aa)) are Cytoplasmic-facing. Positions 104 to 107 (VPEY) match the PY motif motif. Residues 190-213 (ERLPGGTTTQEINPPERAKVNARS) are disordered. Residues 203-213 (PPERAKVNARS) show a composition bias toward basic and acidic residues.

In terms of assembly, interacts with PMT4 and WW domain of RSP5.

It is found in the endoplasmic reticulum membrane. Functionally, regulates chitin deposition in the cell wall. This Saccharomyces cerevisiae (strain ATCC 204508 / S288c) (Baker's yeast) protein is Protein RCR1 (RCR1).